Here is a 435-residue protein sequence, read N- to C-terminus: ATP-dependent protease ATPase subunit HslU (435 aa).

Residues isoleucine 18, 60–65 (GVGKTE), aspartate 248, glutamate 313, and arginine 385 contribute to the ATP site.

The protein belongs to the ClpX chaperone family. HslU subfamily. In terms of assembly, a double ring-shaped homohexamer of HslV is capped on each side by a ring-shaped HslU homohexamer. The assembly of the HslU/HslV complex is dependent on binding of ATP.

The protein resides in the cytoplasm. In terms of biological role, ATPase subunit of a proteasome-like degradation complex; this subunit has chaperone activity. The binding of ATP and its subsequent hydrolysis by HslU are essential for unfolding of protein substrates subsequently hydrolyzed by HslV. HslU recognizes the N-terminal part of its protein substrates and unfolds these before they are guided to HslV for hydrolysis. The sequence is that of ATP-dependent protease ATPase subunit HslU from Rhizobium etli (strain CIAT 652).